The chain runs to 337 residues: Glyceraldehyde-3-phosphate dehydrogenase (337 aa).

NAD(+)-binding positions include 12-13 (RI), aspartate 34, and lysine 79. Residues 150–152 (SCT), threonine 181, 210–211 (TG), and arginine 233 contribute to the D-glyceraldehyde 3-phosphate site. The active-site Nucleophile is cysteine 151. Asparagine 315 is an NAD(+) binding site.

It belongs to the glyceraldehyde-3-phosphate dehydrogenase family. Homotetramer.

It is found in the cytoplasm. The enzyme catalyses D-glyceraldehyde 3-phosphate + phosphate + NAD(+) = (2R)-3-phospho-glyceroyl phosphate + NADH + H(+). The protein operates within carbohydrate degradation; glycolysis; pyruvate from D-glyceraldehyde 3-phosphate: step 1/5. This is Glyceraldehyde-3-phosphate dehydrogenase (GPD) from Phanerodontia chrysosporium (White-rot fungus).